Consider the following 87-residue polypeptide: Acyl-CoA-binding protein 2 (87 aa).

The ACB domain occupies 2-87; the sequence is VSQLFEEKAK…VDNLIAKYSS (86 aa). Residues 29 to 33, Lys-51, Lys-55, and Tyr-74 contribute to the an acyl-CoA site; that span reads YGLYK.

The protein belongs to the ACBP family.

In terms of biological role, binds medium- and long-chain acyl-CoA esters with very high affinity and may function as an intracellular carrier of acyl-CoA esters. The sequence is that of Acyl-CoA-binding protein 2 (ACB2) from Saccharomyces pastorianus (strain ATCC 76670 / Carlsberg bottom yeast no.2 / CBS 1503 / CLIB 180 / NBRC 10610 / NRRL Y-1525) (Saaz-type lager yeast).